The chain runs to 1368 residues: DNA-directed RNA polymerase subunit beta (1368 aa).

The protein belongs to the RNA polymerase beta chain family. As to quaternary structure, the RNAP catalytic core consists of 2 alpha, 1 beta, 1 beta' and 1 omega subunit. When a sigma factor is associated with the core the holoenzyme is formed, which can initiate transcription.

It carries out the reaction RNA(n) + a ribonucleoside 5'-triphosphate = RNA(n+1) + diphosphate. DNA-dependent RNA polymerase catalyzes the transcription of DNA into RNA using the four ribonucleoside triphosphates as substrates. The polypeptide is DNA-directed RNA polymerase subunit beta (Burkholderia ambifaria (strain MC40-6)).